Consider the following 388-residue polypeptide: Chorismate synthase (388 aa).

Residues R39 and R45 each coordinate NADP(+). Positions 95–118 (EKNEKSRRVSRPRPGHADLVGGMK) are disordered. FMN is bound by residues 130-132 (RSS), 251-252 (NA), G296, 311-315 (KPIPT), and R337.

It belongs to the chorismate synthase family. In terms of assembly, homotetramer. FMNH2 serves as cofactor.

The enzyme catalyses 5-O-(1-carboxyvinyl)-3-phosphoshikimate = chorismate + phosphate. It participates in metabolic intermediate biosynthesis; chorismate biosynthesis; chorismate from D-erythrose 4-phosphate and phosphoenolpyruvate: step 7/7. Its function is as follows. Catalyzes the anti-1,4-elimination of the C-3 phosphate and the C-6 proR hydrogen from 5-enolpyruvylshikimate-3-phosphate (EPSP) to yield chorismate, which is the branch point compound that serves as the starting substrate for the three terminal pathways of aromatic amino acid biosynthesis. This reaction introduces a second double bond into the aromatic ring system. The sequence is that of Chorismate synthase from Listeria monocytogenes serotype 4b (strain CLIP80459).